We begin with the raw amino-acid sequence, 1015 residues long: PHD finger protein 20-like protein 1 (1015 aa).

One can recognise a Tudor 1 domain in the interval 11–71 (ITFEIGARLE…SNRLRPLERP (61 aa)). Residues Lys75 and Lys79 each participate in a glycyl lysine isopeptide (Lys-Gly) (interchain with G-Cter in SUMO2) cross-link. The 57-residue stretch at 85–141 (FDFKAGEEVLARWTDCRYYPAKIEAINKEGTFTVQFYDGVIRCLKRMHIKAMPEDAK) folds into the Tudor 2 domain. 2 disordered regions span residues 183 to 206 (AKNK…RDGG) and 309 to 367 (EQAI…KAPK). Composition is skewed to polar residues over residues 186–197 (KTGSKPRTSANS) and 315–346 (KPQS…SSGK). Phosphoserine is present on Ser368. Disordered stretches follow at residues 389–455 (VINK…SSVP) and 478–513 (CGSE…NPTS). The span at 404–415 (PCKHSERRRRSQ) shows a compositional bias: basic residues. At Ser432 the chain carries Phosphoserine. Polar residues-rich tracts occupy residues 443 to 453 (SISSQNQQESS) and 480 to 489 (SEVTGSQAPD). Residue Lys530 forms a Glycyl lysine isopeptide (Lys-Gly) (interchain with G-Cter in SUMO2) linkage. Basic and acidic residues predominate over residues 539–565 (EKTSTAFGKRKEKDKERKEKRDKDHYK). Residues 539-585 (EKTSTAFGKRKEKDKERKEKRDKDHYKPKQKKKKKKKKKSKQHDYSD) are disordered. Over residues 566 to 579 (PKQKKKKKKKKKSK) the composition is skewed to basic residues. The segment at 681-729 (IVRCICELDEENGFMIQCEECLCWQHSVCMGLLEDSIPEQYICYICRDP) adopts a PHD-type zinc-finger fold. Residue Lys849 forms a Glycyl lysine isopeptide (Lys-Gly) (interchain with G-Cter in SUMO2) linkage. Residues 859-878 (HSYQKPQSFSQDCHSLTDPG) are compositionally biased toward polar residues. The disordered stretch occupies residues 859–889 (HSYQKPQSFSQDCHSLTDPGSSDDDDVSSFE). The segment covering 879–889 (SSDDDDVSSFE) has biased composition (acidic residues). Lys907 is subject to N6-acetyllysine.

As to quaternary structure, interacts with methylated DNMT1 (DNMT1K142me1). Interacts with SOX2.

It localises to the nucleus. Its function is as follows. Is a negative regulator of proteasomal degradation of a set of methylated proteins, including DNMT1 and SOX2. Involved in the maintainance of embryonic stem cells pluripotency, through the regulation of SOX2 levels. This chain is PHD finger protein 20-like protein 1 (Phf20l1), found in Rattus norvegicus (Rat).